Reading from the N-terminus, the 387-residue chain is 1-deoxy-D-xylulose 5-phosphate reductoisomerase (387 aa).

8 residues coordinate NADPH: Thr-10, Gly-11, Ser-12, Ile-13, Gly-36, Lys-37, Asn-38, and Asn-123. Lys-124 serves as a coordination point for 1-deoxy-D-xylulose 5-phosphate. Position 125 (Glu-125) interacts with NADPH. Asp-149 provides a ligand contact to Mn(2+). 1-deoxy-D-xylulose 5-phosphate is bound by residues Ser-150, Glu-151, Ser-175, and His-198. Residue Glu-151 participates in Mn(2+) binding. Position 204 (Gly-204) interacts with NADPH. Positions 211, 216, 217, and 220 each coordinate 1-deoxy-D-xylulose 5-phosphate. Glu-220 serves as a coordination point for Mn(2+).

It belongs to the DXR family. It depends on Mg(2+) as a cofactor. Mn(2+) serves as cofactor.

The catalysed reaction is 2-C-methyl-D-erythritol 4-phosphate + NADP(+) = 1-deoxy-D-xylulose 5-phosphate + NADPH + H(+). Its pathway is isoprenoid biosynthesis; isopentenyl diphosphate biosynthesis via DXP pathway; isopentenyl diphosphate from 1-deoxy-D-xylulose 5-phosphate: step 1/6. Functionally, catalyzes the NADPH-dependent rearrangement and reduction of 1-deoxy-D-xylulose-5-phosphate (DXP) to 2-C-methyl-D-erythritol 4-phosphate (MEP). This is 1-deoxy-D-xylulose 5-phosphate reductoisomerase from Pelotomaculum thermopropionicum (strain DSM 13744 / JCM 10971 / SI).